The primary structure comprises 423 residues: RNA polymerase sigma factor SigA (423 aa).

The disordered stretch occupies residues 1–76 (MKKSKRKNAQ…EEDLPIPKIS (76 aa)). Acidic residues predominate over residues 21–70 (VQEEAEELPEFPEGEPDPDLEDPDLALEDDLLDLPEEGEGLDLEEEEEDL). The sigma-70 factor domain-1 stretch occupies residues 78–113 (SDPVRQYLHEIGQVPLLTLEEEVELARKVEEGMEAI). A sigma-70 factor domain-2 region spans residues 187–257 (LIEANLRLVV…NRAIADQART (71 aa)). The Interaction with polymerase core subunit RpoC motif lies at 211 to 214 (DLIQ). The segment at 266–344 (ETINKLSRTA…DEHLPSPVDA (79 aa)) is sigma-70 factor domain-3. The tract at residues 357 to 409 (ALSKLSEREAMVLKLRKGLIDGREHTLEEVGAFFGVTRERIRQIENKALRKLK) is sigma-70 factor domain-4. Positions 383-402 (LEEVGAFFGVTRERIRQIEN) form a DNA-binding region, H-T-H motif.

This sequence belongs to the sigma-70 factor family. RpoD/SigA subfamily. Interacts transiently with the RNA polymerase catalytic core formed by RpoA, RpoB, RpoC and RpoZ (2 alpha, 1 beta, 1 beta' and 1 omega subunit) to form the RNA polymerase holoenzyme that can initiate transcription.

Its subcellular location is the cytoplasm. Functionally, sigma factors are initiation factors that promote the attachment of RNA polymerase to specific initiation sites and are then released. This sigma factor is the primary sigma factor during exponential growth. The polypeptide is RNA polymerase sigma factor SigA (Thermus thermophilus (strain ATCC BAA-163 / DSM 7039 / HB27)).